A 373-amino-acid polypeptide reads, in one-letter code: tRNA-specific 2-thiouridylase MnmA (373 aa).

ATP contacts are provided by residues Gly-12 to Ser-19 and Met-38. The tract at residues Asn-98–Asp-100 is interaction with target base in tRNA. Residue Cys-103 is the Nucleophile of the active site. Cys-103 and Cys-200 are oxidised to a cystine. Gly-127 provides a ligand contact to ATP. Residues Lys-150–Gln-152 are interaction with tRNA. The active-site Cysteine persulfide intermediate is Cys-200. Positions Arg-312–Tyr-313 are interaction with tRNA.

It belongs to the MnmA/TRMU family.

The protein resides in the cytoplasm. The enzyme catalyses S-sulfanyl-L-cysteinyl-[protein] + uridine(34) in tRNA + AH2 + ATP = 2-thiouridine(34) in tRNA + L-cysteinyl-[protein] + A + AMP + diphosphate + H(+). Functionally, catalyzes the 2-thiolation of uridine at the wobble position (U34) of tRNA, leading to the formation of s(2)U34. In Streptococcus agalactiae serotype III (strain NEM316), this protein is tRNA-specific 2-thiouridylase MnmA.